Here is a 621-residue protein sequence, read N- to C-terminus: DNA-directed RNA polymerase subunit gamma (621 aa).

3 residues coordinate Mg(2+): Asp463, Asp465, and Asp467.

Belongs to the RNA polymerase beta' chain family. RpoC1 subfamily. As to quaternary structure, in cyanobacteria the RNAP catalytic core is composed of 2 alpha, 1 beta, 1 beta', 1 gamma and 1 omega subunit. When a sigma factor is associated with the core the holoenzyme is formed, which can initiate transcription. Requires Mg(2+) as cofactor.

The catalysed reaction is RNA(n) + a ribonucleoside 5'-triphosphate = RNA(n+1) + diphosphate. Functionally, DNA-dependent RNA polymerase catalyzes the transcription of DNA into RNA using the four ribonucleoside triphosphates as substrates. This chain is DNA-directed RNA polymerase subunit gamma, found in Nostoc commune.